The following is a 269-amino-acid chain: Dermonecrotic toxin SpeSicTox-betaIB3 (269 aa).

Histidine 5 is an active-site residue. The Mg(2+) site is built by glutamate 25 and aspartate 27. Catalysis depends on histidine 41, which acts as the Nucleophile. 2 disulfides stabilise this stretch: cysteine 45–cysteine 51 and cysteine 47–cysteine 191. Residue aspartate 85 participates in Mg(2+) binding.

The protein belongs to the arthropod phospholipase D family. Class II subfamily. It depends on Mg(2+) as a cofactor. In terms of tissue distribution, expressed by the venom gland.

It is found in the secreted. It catalyses the reaction an N-(acyl)-sphingosylphosphocholine = an N-(acyl)-sphingosyl-1,3-cyclic phosphate + choline. It carries out the reaction an N-(acyl)-sphingosylphosphoethanolamine = an N-(acyl)-sphingosyl-1,3-cyclic phosphate + ethanolamine. The catalysed reaction is a 1-acyl-sn-glycero-3-phosphocholine = a 1-acyl-sn-glycero-2,3-cyclic phosphate + choline. The enzyme catalyses a 1-acyl-sn-glycero-3-phosphoethanolamine = a 1-acyl-sn-glycero-2,3-cyclic phosphate + ethanolamine. In terms of biological role, dermonecrotic toxins cleave the phosphodiester linkage between the phosphate and headgroup of certain phospholipids (sphingolipid and lysolipid substrates), forming an alcohol (often choline) and a cyclic phosphate. This toxin acts on sphingomyelin (SM). It may also act on ceramide phosphoethanolamine (CPE), lysophosphatidylcholine (LPC) and lysophosphatidylethanolamine (LPE), but not on lysophosphatidylserine (LPS), and lysophosphatidylglycerol (LPG). It acts by transphosphatidylation, releasing exclusively cyclic phosphate products as second products. Induces dermonecrosis, hemolysis, increased vascular permeability, edema, inflammatory response, and platelet aggregation. The protein is Dermonecrotic toxin SpeSicTox-betaIB3 of Sicarius peruensis (Six-eyed sand spider).